A 269-amino-acid chain; its full sequence is Hydroxyethylthiazole kinase (269 aa).

M46 contributes to the substrate binding site. ATP contacts are provided by R121 and T166. G193 contacts substrate.

It belongs to the Thz kinase family. Mg(2+) serves as cofactor.

It catalyses the reaction 5-(2-hydroxyethyl)-4-methylthiazole + ATP = 4-methyl-5-(2-phosphooxyethyl)-thiazole + ADP + H(+). It participates in cofactor biosynthesis; thiamine diphosphate biosynthesis; 4-methyl-5-(2-phosphoethyl)-thiazole from 5-(2-hydroxyethyl)-4-methylthiazole: step 1/1. Its function is as follows. Catalyzes the phosphorylation of the hydroxyl group of 4-methyl-5-beta-hydroxyethylthiazole (THZ). This is Hydroxyethylthiazole kinase from Limosilactobacillus reuteri (strain DSM 20016) (Lactobacillus reuteri).